The chain runs to 254 residues: Proteasome subunit alpha (254 aa).

The segment at 231-254 (ESGAASADGEAETEAETDSGSDEE) is disordered. A compositionally biased stretch (acidic residues) spans 239-254 (GEAETEAETDSGSDEE).

Belongs to the peptidase T1A family. The 20S proteasome core is composed of 14 alpha and 14 beta subunits that assemble into four stacked heptameric rings, resulting in a barrel-shaped structure. The two inner rings, each composed of seven catalytic beta subunits, are sandwiched by two outer rings, each composed of seven alpha subunits. The catalytic chamber with the active sites is on the inside of the barrel. Has probably a gated structure, the ends of the cylinder being occluded by the N-termini of the alpha-subunits. Is likely capped by the proteasome-associated ATPase, ARC. The N-terminus is blocked.

It localises to the cytoplasm. It functions in the pathway protein degradation; proteasomal Pup-dependent pathway. With respect to regulation, the formation of the proteasomal ATPase ARC-20S proteasome complex, likely via the docking of the C-termini of ARC into the intersubunit pockets in the alpha-rings, may trigger opening of the gate for substrate entry. Interconversion between the open-gate and close-gate conformations leads to a dynamic regulation of the 20S proteasome proteolysis activity. Peptidolytic activity is completely inhibited by lactacystin, and to a lesser extent, by N-acetyl-Leu-Leu-norleucinal (Ac-LLnL) and benzoyloxycarbonyl-Leu-Leu-Leu-vinylsulfone (Z-LLL-VS) in vitro. In terms of biological role, component of the proteasome core, a large protease complex with broad specificity involved in protein degradation. The S.coelicolor proteasome is able to cleave oligopeptides after hydrophobic residues, but not after basic or acidic residues, thus displaying chymotrypsin-like activity but not trypsin-like activity. The chain is Proteasome subunit alpha from Streptomyces coelicolor (strain ATCC BAA-471 / A3(2) / M145).